A 213-amino-acid polypeptide reads, in one-letter code: Virulence factor 1 (213 aa).

It localises to the host mitochondrion. Functionally, plays a role in antagonizing the host innate immune response. This chain is Virulence factor 1, found in Norovirus (isolate Mouse/NoV/United States/MNV1/2002/GV) (MNV-1).